A 394-amino-acid polypeptide reads, in one-letter code: MAVAFNRDKPHCNIGTIGHVDHGKTSLATAITIVSSELSDGAVKVKNYDEIDSAPEERARGITIQTAHVEFISKKRHYALVDCPGHVDYIKNMITGASQTDGLILVVSGVDGVMPQTREHVLLAKQVGVPSIIVCINKIDQADPELLELIEMEVRELLTKYDFPGDTVPIIRCSALKAINGDSDAKKGILELMDAIDDYIPQPTRVLDQPFLMPIEDVFSILGRGTVVTGRIERGVIKVGDEVEIVGLRSTQKTICTGVEMFKKELDQGQAGDNVGILLRGIKREDVERGQVLAKPGTITPHCSFEAEVYVLTKEEGGRHTPFFQNYRPQFYCRTTDVTGEIALLSGKEMVMPGDHATLSVNLVAPIAMDQGLSFAIREGGKTIGAGKVSKIIK.

The 196-residue stretch at 9–204 (KPHCNIGTIG…AIDDYIPQPT (196 aa)) folds into the tr-type G domain. Residues 18-25 (GHVDHGKT) form a G1 region. 18–25 (GHVDHGKT) lines the GTP pocket. Residue threonine 25 participates in Mg(2+) binding. Residues 61-65 (GITIQ) are G2. The G3 stretch occupies residues 82–85 (DCPG). GTP-binding positions include 82-86 (DCPGH) and 137-140 (NKID). The tract at residues 137–140 (NKID) is G4. The segment at 174 to 176 (SAL) is G5.

This sequence belongs to the TRAFAC class translation factor GTPase superfamily. Classic translation factor GTPase family. EF-Tu/EF-1A subfamily. As to quaternary structure, monomer.

The protein resides in the cytoplasm. It carries out the reaction GTP + H2O = GDP + phosphate + H(+). Functionally, GTP hydrolase that promotes the GTP-dependent binding of aminoacyl-tRNA to the A-site of ribosomes during protein biosynthesis. The polypeptide is Elongation factor Tu 1 (Orientia tsutsugamushi (strain Boryong) (Rickettsia tsutsugamushi)).